The primary structure comprises 808 residues: Dynamin-related protein 3A (808 aa).

Residues 1–31 (MTIEEVSGETPPSTPPSSSTPSPSSSTTNAA) are disordered. Positions 16-28 (PSSSTPSPSSSTT) are enriched in low complexity. The Dynamin-type G domain occupies 56–330 (TIALPQVVVV…LVQHIKVLLP (275 aa)). A G1 motif region spans residues 66 to 73 (GSQSSGKS). 66–73 (GSQSSGKS) lines the GTP pocket. The segment at 92–94 (CTR) is G2 motif. Positions 172-175 (DLPG) are G3 motif. GTP-binding positions include 172-176 (DLPGI) and 241-244 (TKLD). Residues 241-244 (TKLD) form a G4 motif region. A G5 motif region spans residues 271 to 274 (VNRC). The interval 548-578 (IPHPVARPKDTVEPDRTSSSTSQVKSRSFLG) is disordered. Residues 554 to 563 (RPKDTVEPDR) show a composition bias toward basic and acidic residues. Residues 564–575 (TSSSTSQVKSRS) are compositionally biased toward low complexity. The GED domain maps to 670–761 (IQITKLLLRS…TLDELPLEAD (92 aa)). The tract at residues 774–808 (LTSSKYSTSSSYSASPSTTRRSRRAGDQHQNGYGF) is disordered. Positions 775–792 (TSSKYSTSSSYSASPSTT) are enriched in low complexity.

It belongs to the TRAFAC class dynamin-like GTPase superfamily. Dynamin/Fzo/YdjA family. Homooligomer. Interacts with ARC5 on peroxisomes and ELM1 on mitochondria. Ubiquitous. Preferentially expressed in flowers.

Its subcellular location is the mitochondrion. It is found in the peroxisome. In terms of biological role, involved in the control of mitochondrial and peroxisomal division and morphology. In association with PEX11C, PEX11D, PEX11E and FIS1B, is involved in cell cycle-associated constitutive self-replication of preexisting peroxisomes. The polypeptide is Dynamin-related protein 3A (DRP3A) (Arabidopsis thaliana (Mouse-ear cress)).